Reading from the N-terminus, the 234-residue chain is Leucyl/phenylalanyl-tRNA--protein transferase (234 aa).

The protein belongs to the L/F-transferase family.

It localises to the cytoplasm. It catalyses the reaction N-terminal L-lysyl-[protein] + L-leucyl-tRNA(Leu) = N-terminal L-leucyl-L-lysyl-[protein] + tRNA(Leu) + H(+). The catalysed reaction is N-terminal L-arginyl-[protein] + L-leucyl-tRNA(Leu) = N-terminal L-leucyl-L-arginyl-[protein] + tRNA(Leu) + H(+). It carries out the reaction L-phenylalanyl-tRNA(Phe) + an N-terminal L-alpha-aminoacyl-[protein] = an N-terminal L-phenylalanyl-L-alpha-aminoacyl-[protein] + tRNA(Phe). Functions in the N-end rule pathway of protein degradation where it conjugates Leu, Phe and, less efficiently, Met from aminoacyl-tRNAs to the N-termini of proteins containing an N-terminal arginine or lysine. In Shigella flexneri serotype 5b (strain 8401), this protein is Leucyl/phenylalanyl-tRNA--protein transferase.